Consider the following 285-residue polypeptide: 2,3,4,5-tetrahydropyridine-2,6-dicarboxylate N-succinyltransferase (285 aa).

Residues arginine 111 and aspartate 148 each coordinate substrate.

The protein belongs to the transferase hexapeptide repeat family. Homotrimer.

It localises to the cytoplasm. The enzyme catalyses (S)-2,3,4,5-tetrahydrodipicolinate + succinyl-CoA + H2O = (S)-2-succinylamino-6-oxoheptanedioate + CoA. It participates in amino-acid biosynthesis; L-lysine biosynthesis via DAP pathway; LL-2,6-diaminopimelate from (S)-tetrahydrodipicolinate (succinylase route): step 1/3. The polypeptide is 2,3,4,5-tetrahydropyridine-2,6-dicarboxylate N-succinyltransferase (Rhizobium meliloti (strain 1021) (Ensifer meliloti)).